A 349-amino-acid chain; its full sequence is Glycosyltransferase 8 domain-containing protein 2 (349 aa).

Topologically, residues 1-6 (MALLRK) are cytoplasmic. The chain crosses the membrane as a helical; Signal-anchor for type II membrane protein span at residues 7 to 24 (INQVLLFLLIVTLCVILY). Residues 25–349 (KKVHKGTVPK…AGIFKLNHHS (325 aa)) lie on the Lumenal side of the membrane. The N-linked (GlcNAc...) asparagine glycan is linked to N234.

The protein belongs to the glycosyltransferase 8 family.

Its subcellular location is the membrane. This is Glycosyltransferase 8 domain-containing protein 2 (GLT8D2) from Homo sapiens (Human).